Reading from the N-terminus, the 169-residue chain is Der GTPase-activating protein YihI (169 aa).

2 disordered regions span residues 1 to 98 and 144 to 169; these read MKPS…PQAE and GLSY…LRGN. Residues 10 to 19 are compositionally biased toward basic residues; it reads SKGHAKARRK. Residues 20–30 show a composition bias toward basic and acidic residues; the sequence is TREELDQEARD. Residues 31-40 are compositionally biased toward basic residues; it reads RKRQKKRRGH. The span at 49–58 shows a compositional bias: polar residues; that stretch reads GNTTSGSKGQ. The segment covering 147 to 159 has biased composition (acidic residues); sequence YDDDEEEEEDEKQ. The segment covering 160-169 has biased composition (basic and acidic residues); it reads EDMMRLLRGN.

This sequence belongs to the YihI family. As to quaternary structure, interacts with Der.

Functionally, a GTPase-activating protein (GAP) that modifies Der/EngA GTPase function. May play a role in ribosome biogenesis. This chain is Der GTPase-activating protein YihI, found in Escherichia coli O139:H28 (strain E24377A / ETEC).